Here is a 59-residue protein sequence, read N- to C-terminus: Large ribosomal subunit protein uL30 (59 aa).

It belongs to the universal ribosomal protein uL30 family. Part of the 50S ribosomal subunit.

The chain is Large ribosomal subunit protein uL30 from Citrifermentans bemidjiense (strain ATCC BAA-1014 / DSM 16622 / JCM 12645 / Bem) (Geobacter bemidjiensis).